A 354-amino-acid polypeptide reads, in one-letter code: MTELKNDRYLRALLRQPVDVTPVWMMRQAGRYLPEYKATRAQAGDFMSLCKNAELACEVTLQPLRRYPLDAAILFSDILTIPDAMGLGLYFEAGEGPRFTAPVTCKADVDKLPIPDPEDELGYVMNAVRTIRRELKGEVPLIGFSGSPWTLATYMVEGGSSKAFTVIKKMMYADPQALHLLLDKLAKSVTLYLNAQIKAGAQSVMIFDTWGGVLTGRDYQQFSLYYMHKIVDGLLRENDGRRVPVTLFTKGGGQWLEAMAETGCDALGLDWTTDIADARRRVGHKVALQGNMDPSMLYAPPARIEDEVATILAGFGQGEGHVFNLGHGIHQDVPPEHAGAFVEAVHRLSAQYHS.

Substrate contacts are provided by residues 27-31, Asp-77, Tyr-154, Thr-209, and His-327; that span reads RQAGR.

Belongs to the uroporphyrinogen decarboxylase family. As to quaternary structure, homodimer.

It localises to the cytoplasm. It catalyses the reaction uroporphyrinogen III + 4 H(+) = coproporphyrinogen III + 4 CO2. It participates in porphyrin-containing compound metabolism; protoporphyrin-IX biosynthesis; coproporphyrinogen-III from 5-aminolevulinate: step 4/4. Catalyzes the decarboxylation of four acetate groups of uroporphyrinogen-III to yield coproporphyrinogen-III. This Salmonella paratyphi A (strain ATCC 9150 / SARB42) protein is Uroporphyrinogen decarboxylase.